Consider the following 475-residue polypeptide: Aspartyl/glutamyl-tRNA(Asn/Gln) amidotransferase subunit B (475 aa).

Belongs to the GatB/GatE family. GatB subfamily. As to quaternary structure, heterotrimer of A, B and C subunits.

The catalysed reaction is L-glutamyl-tRNA(Gln) + L-glutamine + ATP + H2O = L-glutaminyl-tRNA(Gln) + L-glutamate + ADP + phosphate + H(+). It carries out the reaction L-aspartyl-tRNA(Asn) + L-glutamine + ATP + H2O = L-asparaginyl-tRNA(Asn) + L-glutamate + ADP + phosphate + 2 H(+). Its function is as follows. Allows the formation of correctly charged Asn-tRNA(Asn) or Gln-tRNA(Gln) through the transamidation of misacylated Asp-tRNA(Asn) or Glu-tRNA(Gln) in organisms which lack either or both of asparaginyl-tRNA or glutaminyl-tRNA synthetases. The reaction takes place in the presence of glutamine and ATP through an activated phospho-Asp-tRNA(Asn) or phospho-Glu-tRNA(Gln). This is Aspartyl/glutamyl-tRNA(Asn/Gln) amidotransferase subunit B from Staphylococcus saprophyticus subsp. saprophyticus (strain ATCC 15305 / DSM 20229 / NCIMB 8711 / NCTC 7292 / S-41).